The primary structure comprises 232 residues: Large ribosomal subunit protein uL1 (232 aa).

The protein belongs to the universal ribosomal protein uL1 family. Part of the 50S ribosomal subunit.

Binds directly to 23S rRNA. The L1 stalk is quite mobile in the ribosome, and is involved in E site tRNA release. Functionally, protein L1 is also a translational repressor protein, it controls the translation of the L11 operon by binding to its mRNA. The protein is Large ribosomal subunit protein uL1 of Xylella fastidiosa (strain M23).